An 89-amino-acid polypeptide reads, in one-letter code: Small ribosomal subunit protein uS15 (89 aa).

This sequence belongs to the universal ribosomal protein uS15 family. As to quaternary structure, part of the 30S ribosomal subunit. Forms a bridge to the 50S subunit in the 70S ribosome, contacting the 23S rRNA.

Functionally, one of the primary rRNA binding proteins, it binds directly to 16S rRNA where it helps nucleate assembly of the platform of the 30S subunit by binding and bridging several RNA helices of the 16S rRNA. Its function is as follows. Forms an intersubunit bridge (bridge B4) with the 23S rRNA of the 50S subunit in the ribosome. In Gluconobacter oxydans (strain 621H) (Gluconobacter suboxydans), this protein is Small ribosomal subunit protein uS15.